Here is a 419-residue protein sequence, read N- to C-terminus: Pregnancy-specific beta-1-glycoprotein 1 (419 aa).

The N-terminal stretch at 1–34 (MGTLSAPPCTQRIKWKGLLLTASLLNFWNLPTTA) is a signal peptide. Residues 35 to 144 (QVTIEAEPTK…TGRFTFTLHL (110 aa)) enclose the Ig-like V-type domain. Residues N61, N104, N111, N199, N259, N268, and N303 are each glycosylated (N-linked (GlcNAc...) asparagine). 3 consecutive Ig-like C2-type domains span residues 149–234 (PSIS…VTLN), 240–327 (PKPY…VTLN), and 335–410 (PRIY…KSMT). Residues C169 and C217 are joined by a disulfide bond. Disulfide bonds link C262-C310 and C354-C394.

The protein belongs to the immunoglobulin superfamily. CEA family.

Its subcellular location is the secreted. The protein is Pregnancy-specific beta-1-glycoprotein 1 (PSG1) of Homo sapiens (Human).